Consider the following 456-residue polypeptide: Bifunctional protein GlmU (456 aa).

Positions 1 to 228 (MPQNTLNIVI…SYLAAGVNNK (228 aa)) are pyrophosphorylase. UDP-N-acetyl-alpha-D-glucosamine-binding positions include 11–14 (LAAG), Lys-25, Gln-75, 80–81 (GT), 102–104 (YGD), Gly-138, Glu-153, Asn-168, and Asn-226. Residue Asp-104 participates in Mg(2+) binding. Residue Asn-226 participates in Mg(2+) binding. A linker region spans residues 229 to 249 (LQLAELERIFQTEQAQELLKA). The tract at residues 250 to 456 (GVTLSDPARF…GWVRPEKDKQ (207 aa)) is N-acetyltransferase. UDP-N-acetyl-alpha-D-glucosamine is bound by residues Arg-332 and Lys-350. His-362 serves as the catalytic Proton acceptor. Residues Tyr-365 and Asn-376 each coordinate UDP-N-acetyl-alpha-D-glucosamine. Residues Ala-379, 385-386 (NY), Ser-404, Ala-422, and Arg-439 each bind acetyl-CoA.

In the N-terminal section; belongs to the N-acetylglucosamine-1-phosphate uridyltransferase family. The protein in the C-terminal section; belongs to the transferase hexapeptide repeat family. Homotrimer. Mg(2+) is required as a cofactor.

It is found in the cytoplasm. The enzyme catalyses alpha-D-glucosamine 1-phosphate + acetyl-CoA = N-acetyl-alpha-D-glucosamine 1-phosphate + CoA + H(+). It carries out the reaction N-acetyl-alpha-D-glucosamine 1-phosphate + UTP + H(+) = UDP-N-acetyl-alpha-D-glucosamine + diphosphate. The protein operates within nucleotide-sugar biosynthesis; UDP-N-acetyl-alpha-D-glucosamine biosynthesis; N-acetyl-alpha-D-glucosamine 1-phosphate from alpha-D-glucosamine 6-phosphate (route II): step 2/2. Its pathway is nucleotide-sugar biosynthesis; UDP-N-acetyl-alpha-D-glucosamine biosynthesis; UDP-N-acetyl-alpha-D-glucosamine from N-acetyl-alpha-D-glucosamine 1-phosphate: step 1/1. It participates in bacterial outer membrane biogenesis; LPS lipid A biosynthesis. Functionally, catalyzes the last two sequential reactions in the de novo biosynthetic pathway for UDP-N-acetylglucosamine (UDP-GlcNAc). The C-terminal domain catalyzes the transfer of acetyl group from acetyl coenzyme A to glucosamine-1-phosphate (GlcN-1-P) to produce N-acetylglucosamine-1-phosphate (GlcNAc-1-P), which is converted into UDP-GlcNAc by the transfer of uridine 5-monophosphate (from uridine 5-triphosphate), a reaction catalyzed by the N-terminal domain. This Neisseria meningitidis serogroup C / serotype 2a (strain ATCC 700532 / DSM 15464 / FAM18) protein is Bifunctional protein GlmU.